A 525-amino-acid polypeptide reads, in one-letter code: GMP synthase [glutamine-hydrolyzing] (525 aa).

The 201-residue stretch at 7–207 (RILVIDFGSQ…ITCICRCKSS (201 aa)) folds into the Glutamine amidotransferase type-1 domain. The Nucleophile role is filled by C84. Residues H181 and E183 contribute to the active site. Positions 208–400 (WKIANIIDDI…LGIPYDIAYR (193 aa)) constitute a GMPS ATP-PPase domain. 235-241 (SGGIDSL) serves as a coordination point for ATP.

Homodimer.

The enzyme catalyses XMP + L-glutamine + ATP + H2O = GMP + L-glutamate + AMP + diphosphate + 2 H(+). It functions in the pathway purine metabolism; GMP biosynthesis; GMP from XMP (L-Gln route): step 1/1. Catalyzes the synthesis of GMP from XMP. The polypeptide is GMP synthase [glutamine-hydrolyzing] (Blochmanniella pennsylvanica (strain BPEN)).